Here is a 578-residue protein sequence, read N- to C-terminus: Cholesterol oxidase (578 aa).

FAD contacts are provided by Gly15, Glu34, Gly85, Ala90, and Val230. His470 acts as the Proton acceptor in catalysis. Gly503 serves as a coordination point for FAD. A disordered region spans residues 529-551; that stretch reads WPNKGETDRRPPQGEPYRRLAPI. Over residues 533-546 the composition is skewed to basic and acidic residues; the sequence is GETDRRPPQGEPYR.

Belongs to the GMC oxidoreductase family. FAD is required as a cofactor.

Its subcellular location is the secreted. It carries out the reaction cholesterol + O2 = cholest-5-en-3-one + H2O2. The enzyme catalyses cholest-5-en-3-one = cholest-4-en-3-one. The protein operates within steroid metabolism; cholesterol degradation. Bifunctional enzyme that catalyzes the oxidation and isomerization of cholesterol to cholestenone (cholest-4-en-3-one), an initial step in the cholesterol degradation process. Contributes to virulence. The polypeptide is Cholesterol oxidase (choD) (Mycobacterium tuberculosis (strain CDC 1551 / Oshkosh)).